The primary structure comprises 300 residues: 4-hydroxy-tetrahydrodipicolinate synthase (300 aa).

Thr-45 provides a ligand contact to pyruvate. Tyr-140 (proton donor/acceptor) is an active-site residue. The active-site Schiff-base intermediate with substrate is Lys-169. Residue Ile-210 participates in pyruvate binding.

It belongs to the DapA family. In terms of assembly, homotetramer; dimer of dimers.

It is found in the cytoplasm. It catalyses the reaction L-aspartate 4-semialdehyde + pyruvate = (2S,4S)-4-hydroxy-2,3,4,5-tetrahydrodipicolinate + H2O + H(+). The protein operates within amino-acid biosynthesis; L-lysine biosynthesis via DAP pathway; (S)-tetrahydrodipicolinate from L-aspartate: step 3/4. Catalyzes the condensation of (S)-aspartate-beta-semialdehyde [(S)-ASA] and pyruvate to 4-hydroxy-tetrahydrodipicolinate (HTPA). This chain is 4-hydroxy-tetrahydrodipicolinate synthase, found in Helicobacter pylori (strain HPAG1).